The chain runs to 342 residues: NADH-quinone oxidoreductase subunit H (342 aa).

The next 8 membrane-spanning stretches (helical) occupy residues 15 to 35, 86 to 106, 119 to 139, 159 to 179, 190 to 210, 251 to 271, 277 to 297, and 316 to 336; these read LLII…LMVA, VLFI…WAVV, VGVL…IIAG, VSYE…VGSL, HVWF…SGLA, FMIC…PFDI, VPGP…FFWV, and VFLP…ELAG.

This sequence belongs to the complex I subunit 1 family. NDH-1 is composed of 14 different subunits. Subunits NuoA, H, J, K, L, M, N constitute the membrane sector of the complex.

The protein resides in the cell inner membrane. It catalyses the reaction a quinone + NADH + 5 H(+)(in) = a quinol + NAD(+) + 4 H(+)(out). Its function is as follows. NDH-1 shuttles electrons from NADH, via FMN and iron-sulfur (Fe-S) centers, to quinones in the respiratory chain. The immediate electron acceptor for the enzyme in this species is believed to be ubiquinone. Couples the redox reaction to proton translocation (for every two electrons transferred, four hydrogen ions are translocated across the cytoplasmic membrane), and thus conserves the redox energy in a proton gradient. This subunit may bind ubiquinone. This chain is NADH-quinone oxidoreductase subunit H, found in Granulibacter bethesdensis (strain ATCC BAA-1260 / CGDNIH1).